The primary structure comprises 124 residues: MAETSKADGGRLTTHVLDTATGKPAAGLSIALYRLDGSARTHLKTVATNADGRCDAALLAGAEFRAGEYELVFAAGDYLRGQGTKLPEPAFLDSVPIRFGMAEAVHYHVPLLISPYGYSTYRGS.

Substrate-binding residues include H15, R53, and Y121.

This sequence belongs to the transthyretin family. 5-hydroxyisourate hydrolase subfamily. Homotetramer.

It catalyses the reaction 5-hydroxyisourate + H2O = 5-hydroxy-2-oxo-4-ureido-2,5-dihydro-1H-imidazole-5-carboxylate + H(+). Its function is as follows. Catalyzes the hydrolysis of 5-hydroxyisourate (HIU) to 2-oxo-4-hydroxy-4-carboxy-5-ureidoimidazoline (OHCU). The chain is 5-hydroxyisourate hydrolase from Mesorhizobium japonicum (strain LMG 29417 / CECT 9101 / MAFF 303099) (Mesorhizobium loti (strain MAFF 303099)).